Reading from the N-terminus, the 613-residue chain is Na(+)/H(+) antiporter NhaA 1 (613 aa).

The tract at residues 1-23 (MTEASARTIGPLPSRFSRDPKTP) is disordered. The tract at residues 1-408 (MTEASARTIG…DPARQDEARV (408 aa)) is na(+)/H(+) antiporter NhaA. Transmembrane regions (helical) follow at residues 29 to 49 (AAAALLLAFTVLAILWANSPW), 81 to 101 (GLMAFFFFIVGLEVKSEFVIG), 110 to 130 (AVPVVAAIAGLIVPAVIFLTF), 138 to 158 (QAWGVVISTDTAFLVGALAVI), 168 to 188 (IFLLTLAVVDDVGALGAIALF), 191 to 211 (DDLKLAPLAVAALLIAALAMV), 231 to 251 (IALYLAHVHPTLAGVAVAVLI), 300 to 320 (AVGPYVSFVVLPIFALANAGV), 337 to 357 (WGIVAGLVVGKFVGITAATAL), 377 to 397 (GGAALSGIGFTISLFIVDVAI), and 408 to 428 (VGVLIASVLAFTLSWALFRIT). The region spanning 409 to 613 (GVLIASVLAF…SLIRALEAGR (205 aa)) is the Thioredoxin domain.

It in the N-terminal section; belongs to the NhaA Na(+)/H(+) (TC 2.A.33) antiporter family.

It is found in the cell membrane. The enzyme catalyses Na(+)(in) + 2 H(+)(out) = Na(+)(out) + 2 H(+)(in). Functionally, na(+)/H(+) antiporter that extrudes sodium in exchange for external protons. The sequence is that of Na(+)/H(+) antiporter NhaA 1 from Mycobacterium sp. (strain KMS).